The primary structure comprises 143 residues: Nucleoside diphosphate kinase (143 aa).

The ATP site is built by K11, F59, R87, T93, R104, and N114. Residue H117 is the Pros-phosphohistidine intermediate of the active site.

This sequence belongs to the NDK family. Homotetramer. It depends on Mg(2+) as a cofactor.

It localises to the cytoplasm. The enzyme catalyses a 2'-deoxyribonucleoside 5'-diphosphate + ATP = a 2'-deoxyribonucleoside 5'-triphosphate + ADP. The catalysed reaction is a ribonucleoside 5'-diphosphate + ATP = a ribonucleoside 5'-triphosphate + ADP. Functionally, major role in the synthesis of nucleoside triphosphates other than ATP. The ATP gamma phosphate is transferred to the NDP beta phosphate via a ping-pong mechanism, using a phosphorylated active-site intermediate. This is Nucleoside diphosphate kinase from Pseudoalteromonas atlantica (strain T6c / ATCC BAA-1087).